We begin with the raw amino-acid sequence, 177 residues long: Isopentenyl-diphosphate Delta-isomerase 2 (177 aa).

The Mn(2+) site is built by His-24 and His-30. The Nudix hydrolase domain maps to 28 to 160 (MLHRAFSIFV…PDVYTVWFKK (133 aa)). Cys-65 is an active-site residue. Cys-65 contacts Mg(2+). His-67 serves as a coordination point for Mn(2+). Glu-85 provides a ligand contact to Mg(2+). Mn(2+) contacts are provided by Glu-110 and Glu-112. Glu-112 is an active-site residue.

The protein belongs to the IPP isomerase type 1 family. Homodimer. Mg(2+) serves as cofactor. Mn(2+) is required as a cofactor.

It localises to the cytoplasm. The catalysed reaction is isopentenyl diphosphate = dimethylallyl diphosphate. The protein operates within isoprenoid biosynthesis; dimethylallyl diphosphate biosynthesis; dimethylallyl diphosphate from isopentenyl diphosphate: step 1/1. Its function is as follows. Catalyzes the 1,3-allylic rearrangement of the homoallylic substrate isopentenyl (IPP) to its highly electrophilic allylic isomer, dimethylallyl diphosphate (DMAPP). This chain is Isopentenyl-diphosphate Delta-isomerase 2, found in Photorhabdus laumondii subsp. laumondii (strain DSM 15139 / CIP 105565 / TT01) (Photorhabdus luminescens subsp. laumondii).